We begin with the raw amino-acid sequence, 20 residues long: D-alpha-glycerophosphatase (20 aa).

As to quaternary structure, monomer. The cofactor is Mg(2+). Mn(2+) serves as cofactor.

It is found in the cytoplasm. The protein operates within polyol metabolism; glycerol biosynthesis. The sequence is that of D-alpha-glycerophosphatase from Bacillus licheniformis.